Reading from the N-terminus, the 252-residue chain is MSNQDPHHQRDSLFATPIANLGDWRFDERVAEVFPDMIQRSVPGYSNIVSMIGMLAGRFVTSNSQIYDMGCSLGASTLAMRRNIVAENCKIIAVDNSPAMVERCRRHIDAFRSQTPVEVIEADILNIDIQNASMVVLNFTLQFLNPQDRQGLLNRIYQGLRPGGVLVLSEKFSFEDQQIGELLFNMHHDFKRANGYSELEISQKRSMLENVMLTDSVETHKSRLHQSGFNHVEVWFQCFNFGSLLAIKGADE.

S-adenosyl-L-methionine contacts are provided by residues tyrosine 45, glycine 70–serine 72, aspartate 95–asparagine 96, aspartate 123–isoleucine 124, asparagine 138, and arginine 205.

It belongs to the class I-like SAM-binding methyltransferase superfamily. Cx-SAM synthase family. Homodimer.

The enzyme catalyses prephenate + S-adenosyl-L-methionine = carboxy-S-adenosyl-L-methionine + 3-phenylpyruvate + H2O. Its function is as follows. Catalyzes the conversion of S-adenosyl-L-methionine (SAM) to carboxy-S-adenosyl-L-methionine (Cx-SAM). This is Carboxy-S-adenosyl-L-methionine synthase from Photorhabdus laumondii subsp. laumondii (strain DSM 15139 / CIP 105565 / TT01) (Photorhabdus luminescens subsp. laumondii).